The following is a 240-amino-acid chain: Aspartate/glutamate leucyltransferase (240 aa).

The protein belongs to the R-transferase family. Bpt subfamily.

It localises to the cytoplasm. The catalysed reaction is N-terminal L-glutamyl-[protein] + L-leucyl-tRNA(Leu) = N-terminal L-leucyl-L-glutamyl-[protein] + tRNA(Leu) + H(+). The enzyme catalyses N-terminal L-aspartyl-[protein] + L-leucyl-tRNA(Leu) = N-terminal L-leucyl-L-aspartyl-[protein] + tRNA(Leu) + H(+). Functions in the N-end rule pathway of protein degradation where it conjugates Leu from its aminoacyl-tRNA to the N-termini of proteins containing an N-terminal aspartate or glutamate. This Thiobacillus denitrificans (strain ATCC 25259 / T1) protein is Aspartate/glutamate leucyltransferase.